The sequence spans 406 residues: UPF0754 membrane protein SYNPCC7002_A1087 (406 aa).

A helical membrane pass occupies residues 384 to 404 (IVNLGGVLGFLVGVAQSVILL).

This sequence belongs to the UPF0754 family.

The protein resides in the cell inner membrane. The protein is UPF0754 membrane protein SYNPCC7002_A1087 of Picosynechococcus sp. (strain ATCC 27264 / PCC 7002 / PR-6) (Agmenellum quadruplicatum).